We begin with the raw amino-acid sequence, 52 residues long: Rubredoxin (52 aa).

Residues 1 to 51 (MDKYECSICGYIYDEAEGDDGNVAAGTKFADLPADWVCPTCGADKDAFVKM) enclose the Rubredoxin-like domain. Fe cation contacts are provided by C6, C9, C38, and C41.

This sequence belongs to the rubredoxin family. Fe(3+) is required as a cofactor.

In terms of biological role, rubredoxin is a small nonheme, iron protein lacking acid-labile sulfide. Its single Fe, chelated to 4 Cys, functions as an electron acceptor and may also stabilize the conformation of the molecule. The sequence is that of Rubredoxin from Megasphaera elsdenii.